Consider the following 304-residue polypeptide: Small glutamine-rich tetratricopeptide repeat-containing protein beta (304 aa).

4 TPR repeats span residues 15–49 (LREQ…SPED), 85–118 (ADQL…DPNN), 120–152 (VYYC…DSKY), and 153–186 (SKAY…DPEN). K131 bears the N6-acetyllysine mark. Residues S293, S295, and S297 each carry the phosphoserine modification.

This sequence belongs to the SGT family. In terms of assembly, homooligomerize. As to expression, expressed specifically in brain.

Its function is as follows. Co-chaperone that binds directly to HSC70 and HSP70 and regulates their ATPase activity. The chain is Small glutamine-rich tetratricopeptide repeat-containing protein beta (Sgtb) from Rattus norvegicus (Rat).